The sequence spans 62 residues: Photosystem II reaction center protein Z (62 aa).

Transmembrane regions (helical) follow at residues 8 to 28 (AVFA…LVFA) and 41 to 61 (FSGT…NSLI).

The protein belongs to the PsbZ family. As to quaternary structure, PSII is composed of 1 copy each of membrane proteins PsbA, PsbB, PsbC, PsbD, PsbE, PsbF, PsbH, PsbI, PsbJ, PsbK, PsbL, PsbM, PsbT, PsbY, PsbZ, Psb30/Ycf12, at least 3 peripheral proteins of the oxygen-evolving complex and a large number of cofactors. It forms dimeric complexes.

The protein resides in the plastid. Its subcellular location is the chloroplast thylakoid membrane. Its function is as follows. May control the interaction of photosystem II (PSII) cores with the light-harvesting antenna, regulates electron flow through the 2 photosystem reaction centers. PSII is a light-driven water plastoquinone oxidoreductase, using light energy to abstract electrons from H(2)O, generating a proton gradient subsequently used for ATP formation. This chain is Photosystem II reaction center protein Z, found in Oryza nivara (Indian wild rice).